Consider the following 299-residue polypeptide: Protease HtpX homolog (299 aa).

2 helical membrane passes run 15 to 35 and 39 to 59; these read ILLLVFFLLLALVGYAVGYLF and GLGGLVIALIIGFIYALSMIF. Position 143 (His-143) interacts with Zn(2+). Residue Glu-144 is part of the active site. Residue His-147 participates in Zn(2+) binding. The next 2 membrane-spanning stretches (helical) occupy residues 158–178 and 198–218; these read IAVALASAITMLSSMAGRMMW and IIMLVVSLLAIVLAPLAATLV. Glu-227 provides a ligand contact to Zn(2+).

It belongs to the peptidase M48B family. Zn(2+) is required as a cofactor.

It is found in the cell membrane. The protein is Protease HtpX homolog of Streptococcus pneumoniae serotype 19F (strain G54).